Here is a 387-residue protein sequence, read N- to C-terminus: Zinc finger protein neuro-d4 (387 aa).

Residues Lys106, Lys129, and Lys133 each participate in a glycyl lysine isopeptide (Lys-Gly) (interchain with G-Cter in SUMO2) cross-link. A C2H2-type zinc finger spans residues 195 to 218 (YVCDICGKRYKNRPGLSYHYTHTH). 2 consecutive PHD-type zinc fingers follow at residues 271-328 (NGYC…CKSC) and 325-375 (CKSC…CLRH). Positions 274, 277, 293, 296, 301, 304, 322, 325, 328, 331, 343, 346, 351, 354, 369, and 372 each coordinate Zn(2+).

The protein belongs to the requiem/DPF family. As to quaternary structure, component of neuron-specific chromatin remodeling complex (nBAF complex) composed of at least, ARID1A/BAF250A or ARID1B/BAF250B, SMARCD1/BAF60A, SMARCD3/BAF60C, SMARCA2/BRM/BAF190B, SMARCA4/BRG1/BAF190A, SMARCB1/BAF47, SMARCC1/BAF155, SMARCE1/BAF57, SMARCC2/BAF170, DPF1/BAF45B, DPF3/BAF45C, ACTL6B/BAF53B and actin. In terms of tissue distribution, at embryonic stages, predominant expression in the nervous system. Expressed specifically in postmitotic neurons (at protein level).

It is found in the cytoplasm. The protein resides in the nucleus. May have an important role in developing neurons by participating in regulation of cell survival, possibly as a neurospecific transcription factor. Belongs to the neuron-specific chromatin remodeling complex (nBAF complex). During neural development a switch from a stem/progenitor to a postmitotic chromatin remodeling mechanism occurs as neurons exit the cell cycle and become committed to their adult state. The transition from proliferating neural stem/progenitor cells to postmitotic neurons requires a switch in subunit composition of the npBAF and nBAF complexes. As neural progenitors exit mitosis and differentiate into neurons, npBAF complexes which contain ACTL6A/BAF53A and PHF10/BAF45A, are exchanged for homologous alternative ACTL6B/BAF53B and DPF1/BAF45B or DPF3/BAF45C subunits in neuron-specific complexes (nBAF). The npBAF complex is essential for the self-renewal/proliferative capacity of the multipotent neural stem cells. The nBAF complex along with CREST plays a role regulating the activity of genes essential for dendrite growth. The polypeptide is Zinc finger protein neuro-d4 (Mus musculus (Mouse)).